The primary structure comprises 347 residues: Heat-inducible transcription repressor HrcA (347 aa).

This sequence belongs to the HrcA family.

Negative regulator of class I heat shock genes (grpE-dnaK-dnaJ and groELS operons). Prevents heat-shock induction of these operons. The polypeptide is Heat-inducible transcription repressor HrcA (Sorangium cellulosum (strain So ce56) (Polyangium cellulosum (strain So ce56))).